Consider the following 314-residue polypeptide: MEKPFGFVVIDKPSGLTSHDCVNRLRKVFGIRKIGHSGTLDPAVTGVLPIAIGDATRLISYLQGSKAYTGIIQLGATTNTDDMQGEIIESKAWPLITQNDINYLLENFRGEILQKPPIFSSVHIKGERAYKKARKGEKFDLIPKKVTINKLNLISWSQNKGELLVDVDCSTGTYIRSLARDIGDKIGCGGYLKSLRRTKAYNFIENHSVKLPEKSDFYPEEDKPKVLNPNIFFKHLSSFELISEEEIISWRSGRKISFQNNIKRLKVSKNNEVEDSFIHNNNILVLNKENKILGIACLDESFAIKPKVVFNAIG.

Catalysis depends on D41, which acts as the Nucleophile.

This sequence belongs to the pseudouridine synthase TruB family. Type 1 subfamily.

It catalyses the reaction uridine(55) in tRNA = pseudouridine(55) in tRNA. Responsible for synthesis of pseudouridine from uracil-55 in the psi GC loop of transfer RNAs. The sequence is that of tRNA pseudouridine synthase B from Prochlorococcus marinus (strain NATL1A).